Consider the following 207-residue polypeptide: Glycerol-3-phosphate acyltransferase 1 (207 aa).

5 helical membrane passes run 3–23 (YVIA…QIVG), 53–73 (IVVA…LLIL), 85–105 (HIYI…PITM), 127–147 (IALI…YLAV), and 154–174 (ISFL…IVVG).

The protein belongs to the PlsY family. Probably interacts with PlsX.

The protein localises to the cell membrane. It carries out the reaction an acyl phosphate + sn-glycerol 3-phosphate = a 1-acyl-sn-glycero-3-phosphate + phosphate. It participates in lipid metabolism; phospholipid metabolism. In terms of biological role, catalyzes the transfer of an acyl group from acyl-phosphate (acyl-PO(4)) to glycerol-3-phosphate (G3P) to form lysophosphatidic acid (LPA). This enzyme utilizes acyl-phosphate as fatty acyl donor, but not acyl-CoA or acyl-ACP. The protein is Glycerol-3-phosphate acyltransferase 1 of Oceanobacillus iheyensis (strain DSM 14371 / CIP 107618 / JCM 11309 / KCTC 3954 / HTE831).